The sequence spans 474 residues: 3-isopropylmalate dehydratase large subunit (474 aa).

Residues cysteine 352, cysteine 413, and cysteine 416 each contribute to the [4Fe-4S] cluster site.

The protein belongs to the aconitase/IPM isomerase family. LeuC type 1 subfamily. Heterodimer of LeuC and LeuD. Requires [4Fe-4S] cluster as cofactor.

It carries out the reaction (2R,3S)-3-isopropylmalate = (2S)-2-isopropylmalate. The protein operates within amino-acid biosynthesis; L-leucine biosynthesis; L-leucine from 3-methyl-2-oxobutanoate: step 2/4. Its function is as follows. Catalyzes the isomerization between 2-isopropylmalate and 3-isopropylmalate, via the formation of 2-isopropylmaleate. This Pseudomonas savastanoi pv. phaseolicola (strain 1448A / Race 6) (Pseudomonas syringae pv. phaseolicola (strain 1448A / Race 6)) protein is 3-isopropylmalate dehydratase large subunit.